Reading from the N-terminus, the 102-residue chain is Small ribosomal subunit protein uS10 (102 aa).

Belongs to the universal ribosomal protein uS10 family. Part of the 30S ribosomal subunit.

Its function is as follows. Involved in the binding of tRNA to the ribosomes. This chain is Small ribosomal subunit protein uS10, found in Thiobacillus denitrificans (strain ATCC 25259 / T1).